A 316-amino-acid polypeptide reads, in one-letter code: KRR1 small subunit processome component (316 aa).

The 71-residue stretch at 122 to 192 (ACDVIKIGNF…VRRVVEDCMK (71 aa)) folds into the KH domain. Basic and acidic residues predominate over residues 279-304 (KKLNEQKEKQMEREIERQEERAKDFI). The tract at residues 279–316 (KKLNEQKEKQMEREIERQEERAKDFIAPEEEAYKPNQN) is disordered.

This sequence belongs to the KRR1 family. In terms of assembly, component of the ribosomal small subunit (SSU) processome composed of at least 40 protein subunits and snoRNA U3. Interacts with snoRNA U3. Interacts with MPP10, KRI1 and with ribosomal proteins RPS1A, RPS4A, RPS4B, RPS8A, RPS8B, RPS11A, RPS11B, RPS13, RPS24, RPS25, RPL4A, RPL7B, RPL8, RPL23, RPL25 and RPL28.

It localises to the nucleus. Its subcellular location is the nucleolus. In terms of biological role, required for 40S ribosome biogenesis. Involved in nucleolar processing of pre-18S ribosomal RNA and ribosome assembly. Essential for vegetative growth. The chain is KRR1 small subunit processome component from Saccharomyces cerevisiae (strain RM11-1a) (Baker's yeast).